A 94-amino-acid polypeptide reads, in one-letter code: Phosphoribosyl-ATP pyrophosphatase (94 aa).

It belongs to the PRA-PH family.

The protein localises to the cytoplasm. It carries out the reaction 1-(5-phospho-beta-D-ribosyl)-ATP + H2O = 1-(5-phospho-beta-D-ribosyl)-5'-AMP + diphosphate + H(+). Its pathway is amino-acid biosynthesis; L-histidine biosynthesis; L-histidine from 5-phospho-alpha-D-ribose 1-diphosphate: step 2/9. The polypeptide is Phosphoribosyl-ATP pyrophosphatase (Pyrobaculum islandicum (strain DSM 4184 / JCM 9189 / GEO3)).